The primary structure comprises 1689 residues: Cullin-7 (1689 aa).

One can recognise a CPH domain in the interval 349-422 (RASFASFNTY…HWHMLEILGF (74 aa)). The 180-residue stretch at 793–972 (PIQIPFFDVF…HTRLFYMVRA (180 aa)) folds into the DOC domain. A compositionally biased stretch (basic and acidic residues) spans 1321-1337 (VAHEDSGREDKSKKEEA). The tract at residues 1321 to 1371 (VAHEDSGREDKSKKEEAIGEAAAVAMAEEEDQGKKEEGEEEGEGEDEEEER) is disordered. A compositionally biased stretch (acidic residues) spans 1358-1370 (GEEEGEGEDEEEE). Lys-1567 participates in a covalent cross-link: Glycyl lysine isopeptide (Lys-Gly) (interchain with G-Cter in NEDD8).

This sequence belongs to the cullin family. Component of the 3M complex, composed of core components CUL7, CCDC8 and OBSL1. Component of the Cul7-RING(FBXW8) complex consisting of CUL7, RBX1, SKP1 and FBXW8. Within the Cul7-RING(FBXW8) complex interacts with FBXW8 and RBX1, but not with SKP1. Interacts with CUL1 (via the C-terminal domain); the interaction seems to be mediated by FBXW8; it is likely specific to FBXW8, but not other F-box proteins. Interacts (via the CPH domain) with p53/TP53; the interaction preferentially involves tetrameric and dimeric p53/TP53; this interaction recruits p53/TP53 for ubiquitination by neddylated CUL1-RBX1. The CUL7-CUL9 heterodimer seems to interact specifically with p53/TP53. Interacts with FBXW8; interaction is mutually exclusive of binding to CUL9 or p53/TP53. Interacts with CUL9; leading to inhibited CUL9 activity. Interacts with OBSL1. Interacts (as part of the 3M complex) with HDAC4 and HDAC5; it is negatively regulated by ANKRA2.

It localises to the cytoplasm. The protein localises to the cytoskeleton. Its subcellular location is the microtubule organizing center. It is found in the centrosome. The protein resides in the perinuclear region. It localises to the golgi apparatus. The protein operates within protein modification; protein ubiquitination. Functionally, core component of the 3M and Cul7-RING(FBXW8) complexes, which mediate the ubiquitination and subsequent proteasomal degradation of target proteins. Core component of the 3M complex, a complex required to regulate microtubule dynamics and genome integrity. It is unclear how the 3M complex regulates microtubules, it could act by controlling the level of a microtubule stabilizer. The Cul7-RING(FBXW8) complex alone lacks ubiquitination activity and does not promote polyubiquitination and proteasomal degradation of p53/TP53. However it mediates recruitment of p53/TP53 for ubiquitination by neddylated CUL1-RBX1. Interaction with CUL9 is required to inhibit CUL9 activity and ubiquitination of BIRC5. The Cul7-RING(FBXW8) complex also mediates ubiquitination and consequent degradation of target proteins such as GORASP1, IRS1 and MAP4K1/HPK1. Ubiquitination of GORASP1 regulates Golgi morphogenesis and dendrite patterning in brain. Mediates ubiquitination and degradation of IRS1 in a mTOR-dependent manner: the Cul7-RING(FBXW8) complex recognizes and binds IRS1 previously phosphorylated by S6 kinase (RPS6KB1 or RPS6KB2). The Cul7-RING(FBXW8) complex also mediates ubiquitination of MAP4K1/HPK1: recognizes and binds autophosphorylated MAP4K1/HPK1, leading to its degradation, thereby affecting cell proliferation and differentiation. Acts as a regulator in trophoblast cell epithelial-mesenchymal transition and placental development. While the Cul7-RING(FBXW8) and the 3M complexes are associated and involved in common processes, CUL7 and the Cul7-RING(FBXW8) complex may have additional functions. Probably plays a role in the degradation of proteins involved in endothelial proliferation and/or differentiation. This chain is Cullin-7 (Cul7), found in Mus musculus (Mouse).